Here is a 691-residue protein sequence, read N- to C-terminus: Lectin-domain containing receptor kinase VI.4 (691 aa).

The N-terminal stretch at 1–19 (MGRAKSMVSLLLVLFLVRA) is a signal peptide. At 20 to 306 (HVATTETTTE…AKKRGYNGKV (287 aa)) the chain is on the extracellular side. The legume-lectin like stretch occupies residues 26-273 (TTTEFIFHGF…AHYVMGWSFA (248 aa)). The helical transmembrane segment at 307 to 327 (IALIVALSTVISIMLVLLFLF) threads the bilayer. Residues 328–691 (MMYKKRMQQE…ISSTSLISGR (364 aa)) are Cytoplasmic-facing. A Protein kinase domain is found at 363 to 641 (FKENRVVGTG…LNRDEDVPEI (279 aa)). ATP contacts are provided by residues 369–377 (VGTGGFGIV) and K392. D491 functions as the Proton acceptor in the catalytic mechanism.

It in the C-terminal section; belongs to the protein kinase superfamily. Ser/Thr protein kinase family. In the N-terminal section; belongs to the leguminous lectin family.

The protein localises to the cell membrane. The enzyme catalyses L-seryl-[protein] + ATP = O-phospho-L-seryl-[protein] + ADP + H(+). It catalyses the reaction L-threonyl-[protein] + ATP = O-phospho-L-threonyl-[protein] + ADP + H(+). Its function is as follows. Involved in negative regulation of abscisic acid response in seed germination. The polypeptide is Lectin-domain containing receptor kinase VI.4 (LECRK64) (Arabidopsis thaliana (Mouse-ear cress)).